A 1118-amino-acid chain; its full sequence is Cytospin-A (1118 aa).

Disordered regions lie at residues 1–63 (MKKA…AGMA), 75–176 (KKST…NQIS), 294–324 (SLSP…GSVE), and 359–391 (SSDD…NASE). Positions 80–90 (SSAAPSAPAPA) are enriched in low complexity. The span at 93–117 (ISENKSKISTGTSSSAKRSTSAGNK) shows a compositional bias: polar residues. Positions 120-131 (SSTRERLRERTR) are enriched in basic and acidic residues. Positions 133-145 (NQSKKLPSVSQGA) are enriched in polar residues. Residues 158–171 (TAAEGDIRMSKSKS) show a composition bias toward basic and acidic residues. Positions 168-281 (KSKSDNQISD…LNALGFSLEQ (114 aa)) form a coiled coil. Polar residues predominate over residues 294 to 304 (SLSPEITPGNQ). Over residues 359-373 (SSDDALDAPSSSESE) the composition is skewed to low complexity. Phosphoserine occurs at positions 385, 386, and 390. Coiled coils occupy residues 395–450 (ACLT…MESL) and 488–808 (RYME…RGRV). Ser-869, Ser-882, and Ser-888 each carry phosphoserine. A disordered region spans residues 921 to 999 (TSSTSRPASL…STRSRIREER (79 aa)). Positions 947–957 (RSSEEMKRDIS) are enriched in basic and acidic residues. Over residues 972-992 (TTSPQLSLSSSPTASVTPSTR) the composition is skewed to low complexity. The Calponin-homology (CH) domain maps to 1012 to 1117 (GSKRNALLKW…YVTAIYKYFE (106 aa)).

It belongs to the cytospin-A family. As to quaternary structure, may interact with both microtubules and actin cytoskeleton.

The protein localises to the cytoplasm. It is found in the cytoskeleton. The protein resides in the spindle. It localises to the cell junction. Its subcellular location is the gap junction. Its function is as follows. Involved in cytokinesis and spindle organization. May play a role in actin cytoskeleton organization and microtubule stabilization and hence required for proper cell adhesion and migration. This chain is Cytospin-A (Specc1l), found in Mus musculus (Mouse).